The primary structure comprises 135 residues: Protein Wnt-7b (135 aa).

2 disulfide bridges follow: Cys3-Cys17 and Cys5-Cys12. Ser9 is lipidated: O-palmitoleoyl serine; by PORCN. The interval 41–69 (VEVVRANRLRQPTFLKIKKVRSYQKPMET) is disordered linker. Disulfide bonds link Cys81–Cys112, Cys97–Cys107, and Cys134–Cys135. Residue Asn98 is glycosylated (N-linked (GlcNAc...) asparagine).

Belongs to the Wnt family. In terms of processing, palmitoleoylation is required for efficient binding to frizzled receptors. Depalmitoleoylation leads to Wnt signaling pathway inhibition. In adults, in brain and lung.

The protein resides in the secreted. It localises to the extracellular space. Its subcellular location is the extracellular matrix. Ligand for members of the frizzled family of seven transmembrane receptors that functions in the canonical Wnt/beta-catenin signaling pathway. Required for normal fusion of the chorion and the allantois during placenta development. Required for central nervous system (CNS) angiogenesis and blood-brain barrier regulation. The sequence is that of Protein Wnt-7b (wnt7b) from Xenopus laevis (African clawed frog).